The primary structure comprises 368 residues: FAD-dependent monooxygenase phomE (368 aa).

Ala-11 lines the FAD pocket. Active-site residues include Arg-140 and Tyr-178. FAD contacts are provided by Asp-249 and Gly-262.

It belongs to the paxM FAD-dependent monooxygenase family. As to quaternary structure, monomer. Requires FAD as cofactor.

In terms of biological role, FAD-dependent monooxygenase; part of the gene cluster that mediates the biosynthesis of the phomopsins, a group of hexapeptide mycotoxins which infects lupins and causes lupinosis disease in livestock. The role of phomE within the phomopsins biosynthesis pathway has still to be determined. The pathway starts with the processing of the precursor phomA by several endopeptidases including kexin proteases as well as the cluster-specific S41 family peptidase phomP1 and the oligopeptidase phomG to produce 10 identical copies of the hexapeptide Tyr-Val-Ile-Pro-Ile-Asp. After being excised from the precursor peptide, the core peptides are cyclized and modified post-translationally by enzymes encoded within the gene cluster. The timing and order of proteolysis of the phomA precursor and PTMs are still unknown. Two tyrosinase-like enzymes, phomQ1 and phomQ2, catalyze the chlorination and hydroxylation of Tyr, respectively. PhomYb, is proposed to be involved in the construction of the macrocyclic structure. The other 4 ustYa family proteins may be involved in PTMs that generate the unique structure of phomopsin A. PhomYa is required for the hydroxylation of C-beta of Tyr. PhomYc, phomYd, and phomYe are responsible for the biosynthesis of 2,3-dehydroisoleucine (dIle), 2,3-dehydroaspartic acid (dAsp), and 3,4-dehydroproline (dPro), respectively. While dIle formation by phomYc is indispensable for the installation of dAsp by phomYd, the order of the other PTMs have not been elucidated yet. Most of the biosynthetic enzymes likely have broad substrate specificity, and thus, there might be a metabolic grid from a precursor to phomopsin A. The enzyme(s) responsible for the biosynthesis of 3,4-dehydrovaline (dVal) have also not been identified yet. Finally, phomM acts as an S-adenosylmethionine-dependent alpha-N-methyltransferase that catalyzes two successive N-methylation reactions, converting N-desmethyl-phomopsin A to phomopsin A and phomopsin A further to an N,N-dimethylated congener called phomopsin E. The chain is FAD-dependent monooxygenase phomE from Diaporthe leptostromiformis (Lupinosis disease fungus).